A 475-amino-acid chain; its full sequence is Tetratricopeptide repeat protein 29 (475 aa).

7 TPR repeats span residues 92–131 (DALR…EDAE), 136–173 (FEDV…AQLI), 182–215 (AEAH…TQGR), 234–267 (LRTY…AKEG), 274–307 (AEAS…STDL), 314–347 (GRGY…ARNN), and 354–387 (VRAS…TVEL). The segment at 437–475 (IEPDPVTEEFRGSTVEAVSQNSERLEELSRFPGDQKNET) is disordered. The span at 459 to 475 (ERLEELSRFPGDQKNET) shows a compositional bias: basic and acidic residues.

As to expression, expressed in spermatozoa (at protein level).

The protein resides in the cytoplasm. It localises to the cytoskeleton. It is found in the flagellum axoneme. Axonemal protein which is implicated in axonemal and/or peri-axonemal structure assembly and regulates flagellum assembly and beating and therefore sperm motility. The sequence is that of Tetratricopeptide repeat protein 29 (TTC29) from Homo sapiens (Human).